The primary structure comprises 146 residues: Anti-sigma F factor (146 aa).

Belongs to the anti-sigma-factor family.

It catalyses the reaction L-seryl-[protein] + ATP = O-phospho-L-seryl-[protein] + ADP + H(+). The catalysed reaction is L-threonyl-[protein] + ATP = O-phospho-L-threonyl-[protein] + ADP + H(+). Its function is as follows. Binds to sigma F and blocks its ability to form an RNA polymerase holoenzyme (E-sigma F). Phosphorylates SpoIIAA on a serine residue. This phosphorylation may enable SpoIIAA to act as an anti-anti-sigma factor that counteracts SpoIIAB and thus releases sigma F from inhibition. The protein is Anti-sigma F factor of Lysinibacillus sphaericus (Bacillus sphaericus).